We begin with the raw amino-acid sequence, 218 residues long: Glutathione S-transferase class-mu 26 kDa isozyme 7 (218 aa).

The 82-residue stretch at 2-83 folds into the GST N-terminal domain; sequence PAKLGYWKIR…YIADKHGMLG (82 aa). Glutathione is bound by residues 7-8, 41-45, 54-55, and 67-68; these read YW, WLGDK, NL, and QS. In terms of domain architecture, GST C-terminal spans 85-203; the sequence is TPEERARISM…KSERFIKWPL (119 aa). A substrate-binding site is contributed by Y111.

Belongs to the GST superfamily. Mu family. As to quaternary structure, homodimer.

The catalysed reaction is RX + glutathione = an S-substituted glutathione + a halide anion + H(+). Conjugation of reduced glutathione to a wide number of exogenous and endogenous hydrophobic electrophiles. Functionally, GST isoenzymes appear to play a central role in the parasite detoxification system. Other functions are also suspected including a role in increasing the solubility of haematin in the parasite gut. In Fasciola hepatica (Liver fluke), this protein is Glutathione S-transferase class-mu 26 kDa isozyme 7.